The following is a 188-amino-acid chain: Elongation factor P-like protein (188 aa).

The protein belongs to the elongation factor P family.

This chain is Elongation factor P-like protein, found in Vibrio campbellii (strain ATCC BAA-1116).